A 777-amino-acid chain; its full sequence is Glucocorticoid receptor (777 aa).

Residues 1 to 14 show a composition bias toward basic and acidic residues; it reads MDSKESLTPGKEEN. The interval 1-23 is disordered; that stretch reads MDSKESLTPGKEENPSSVLTQER. The segment at 1–420 is modulating; it reads MDSKESLTPG…TATTGPPPKL (420 aa). The residue at position 8 (Thr-8) is a Phosphothreonine. The residue at position 23 (Arg-23) is an Omega-N-methylarginine. Ser-45, Ser-113, Ser-134, and Ser-141 each carry phosphoserine. The disordered stretch occupies residues 130–182; sequence NRSTSVPENPKSSASSSVSAAPKEKEFPKTHSDVSSEQQNLKGQTGTNGGNVK. Residues 134 to 150 are compositionally biased toward low complexity; that stretch reads SVPENPKSSASSSVSAA. The segment covering 151–163 has biased composition (basic and acidic residues); that stretch reads PKEKEFPKTHSDV. Residues 164-174 show a composition bias toward polar residues; it reads SSEQQNLKGQT. Residues Ser-203, Ser-211, and Ser-226 each carry the phosphoserine modification. Lys-258 participates in a covalent cross-link: Glycyl lysine isopeptide (Lys-Gly) (interchain with G-Cter in SUMO2). Ser-267 bears the Phosphoserine mark. Glycyl lysine isopeptide (Lys-Gly) (interchain with G-Cter in SUMO); alternate cross-links involve residues Lys-277 and Lys-293. Glycyl lysine isopeptide (Lys-Gly) (interchain with G-Cter in SUMO2); alternate cross-links involve residues Lys-277 and Lys-293. A compositionally biased stretch (low complexity) spans 394 to 414; the sequence is SSPSMRPDVSSPPSSSSTATT. The interval 394 to 415 is disordered; it reads SSPSMRPDVSSPPSSSSTATTG. Ser-404 is subject to Phosphoserine. A Glycyl lysine isopeptide (Lys-Gly) (interchain with G-Cter in ubiquitin) cross-link involves residue Lys-419. 2 consecutive NR C4-type zinc fingers follow at residues 421 to 441 and 457 to 481; these read CLVC…CGSC and CAGR…YRKC. Residues 421–486 constitute a DNA-binding region (nuclear receptor); it reads CLVCSDEASG…RYRKCLQAGM (66 aa). N6-acetyllysine occurs at positions 480, 492, 494, and 495. The segment at 485 to 777 is interaction with CLOCK; the sequence is GMNLEARKTK…NIKKLLFHQK (293 aa). The segment at 487 to 523 is hinge; sequence NLEARKTKKKIKGIQQATTGVSQETSENPANKTIVPA. The NR LBD domain occupies 524–758; it reads TLPQLTPTLV…FPEMLAEIIT (235 aa). Residues 532-697 form an interaction with CRY1 region; it reads LVSLLEVIEP…EIRMTYIKEL (166 aa). A Glycyl lysine isopeptide (Lys-Gly) (interchain with G-Cter in SUMO) cross-link involves residue Lys-703.

The protein belongs to the nuclear hormone receptor family. NR3 subfamily. As to quaternary structure, heteromultimeric cytoplasmic complex with HSP90AA1, HSPA1A/HSPA1B, and FKBP5 or another immunophilin such as PPID, STIP1, or the immunophilin homolog PPP5C. Upon ligand binding FKBP5 dissociates from the complex and FKBP4 takes its place, thereby linking the complex to dynein and mediating transport to the nucleus, where the complex dissociates. Probably forms a complex composed of chaperones HSP90 and HSP70, co-chaperones CDC37, PPP5C, TSC1 and client protein TSC2, CDK4, AKT, RAF1 and NR3C1; this complex does not contain co-chaperones STIP1/HOP and PTGES3/p23. Directly interacts with UNC45A. Binds to DNA as a homodimer, and as heterodimer with NR3C2 or the retinoid X receptor. Binds STAT5A and STAT5B homodimers and heterodimers. Interacts with NRIP1, POU2F1, POU2F2 and TRIM28. Interacts with several coactivator complexes, including the SMARCA4 complex, CREBBP/EP300, TADA2L (Ada complex) and p160 coactivators such as NCOA2 and NCOA6. Interaction with BAG1 inhibits transactivation. Interacts with HEXIM1 and TGFB1I1. Interacts with NCOA1. Interacts with NCOA3, SMARCA4, SMARCC1, SMARCD1, and SMARCE1. Interacts with CLOCK, CRY1 and CRY2 in a ligand-dependent fashion. Interacts with CIART. Interacts with RWDD3. Interacts with UBE2I/UBC9 and this interaction is enhanced in the presence of RWDD3. Interacts with GRIP1. Interacts with NR4A3 (via nuclear receptor DNA-binding domain), represses transcription activity of NR4A3 on the POMC promoter Nur response element (NurRE). Directly interacts with PNRC2 to attract and form a complex with UPF1 and DCP1A; the interaction leads to rapid mRNA degradation. Interacts with GSK3B. Interacts with FNIP1 and FNIP2. Interacts (via C-terminus) with HNRNPU (via C-terminus). Interacts with MCM3AP. Interacts (via domain NR LBD) with HSP90AA1 and HSP90AB1. In the absence of hormonal ligand, interacts with TACC1. Interacts (via NR LBD domain) with ZNF764 (via KRAB domain); the interaction regulates transcription factor activity of NR3C1 by directing its actions toward certain biologic pathways. Acetylation by CLOCK reduces its binding to glucocorticoid response elements and its transcriptional activity. Post-translationally, increased proteasome-mediated degradation in response to glucocorticoids. In terms of processing, phosphorylated in the absence of hormone; becomes hyperphosphorylated in the presence of glucocorticoid. The Ser-203, Ser-226 and Ser-404-phosphorylated forms are mainly cytoplasmic, and the Ser-211-phosphorylated form is nuclear. Phosphorylation at Ser-211 increases transcriptional activity. Phosphorylation at Ser-203, Ser-226 and Ser-404 decreases signaling capacity. Phosphorylation at Ser-404 may protect from glucocorticoid-induced apoptosis. Phosphorylation at Ser-203 and Ser-211 is not required in regulation of chromosome segregation. May be dephosphorylated by PPP5C, attenuates NR3C1 action. Ubiquitinated by UBR5, leading to its degradation: UBR5 specifically recognizes and binds ligand-bound NR3C1 when it is not associated with coactivators (NCOAs). In presence of NCOAs, the UBR5-degron is not accessible, preventing its ubiquitination and degradation. Post-translationally, sumoylation at Lys-277 and Lys-293 negatively regulates its transcriptional activity. Sumoylation at Lys-703 positively regulates its transcriptional activity in the presence of RWDD3. Sumoylation at Lys-277 and Lys-293 is dispensable whereas sumoylation at Lys-703 is critical for the stimulatory effect of RWDD3 on its transcriptional activity. Heat shock increases sumoylation in a RWWD3-dependent manner.

It localises to the cytoplasm. The protein resides in the nucleus. Its subcellular location is the mitochondrion. It is found in the cytoskeleton. The protein localises to the spindle. It localises to the microtubule organizing center. The protein resides in the centrosome. Its subcellular location is the chromosome. It is found in the nucleoplasm. In terms of biological role, receptor for glucocorticoids (GC). Has a dual mode of action: as a transcription factor that binds to glucocorticoid response elements (GRE), both for nuclear and mitochondrial DNA, and as a modulator of other transcription factors. Affects inflammatory responses, cellular proliferation and differentiation in target tissues. Involved in chromatin remodeling. Plays a role in rapid mRNA degradation by binding to the 5' UTR of target mRNAs and interacting with PNRC2 in a ligand-dependent manner which recruits the RNA helicase UPF1 and the mRNA-decapping enzyme DCP1A, leading to RNA decay. Could act as a coactivator for STAT5-dependent transcription upon growth hormone (GH) stimulation and could reveal an essential role of hepatic GR in the control of body growth. Mediates glucocorticoid-induced apoptosis. Promotes accurate chromosome segregation during mitosis. May act as a tumor suppressor. May play a negative role in adipogenesis through the regulation of lipolytic and antilipogenic gene expression. This Aotus nancymaae (Ma's night monkey) protein is Glucocorticoid receptor (NR3C1).